The primary structure comprises 154 residues: MPNTDVSSLSMLGQQTETAQSPEQAVLEKVPSNHAGTDYVVRFTAPEFTSLCPMTGQPDFAHIVIDYIPGEWLVESKSLKLFLHSFRNHGAFHEDCSIYIAKRIVELLDPKWLRIGAYWYPRGGIPIDVFWQTGKPPEGVWLPEQGVATYRGRG.

Positions 1-23 are enriched in polar residues; the sequence is MPNTDVSSLSMLGQQTETAQSPE. The disordered stretch occupies residues 1-26; that stretch reads MPNTDVSSLSMLGQQTETAQSPEQAV. The active-site Thioimide intermediate is C52. Catalysis depends on D59, which acts as the Proton donor. Substrate contacts are provided by residues 74–76 and 93–94; these read VES and HE.

Belongs to the GTP cyclohydrolase I family. QueF type 1 subfamily.

The protein localises to the cytoplasm. It carries out the reaction 7-aminomethyl-7-carbaguanine + 2 NADP(+) = 7-cyano-7-deazaguanine + 2 NADPH + 3 H(+). It participates in tRNA modification; tRNA-queuosine biosynthesis. Functionally, catalyzes the NADPH-dependent reduction of 7-cyano-7-deazaguanine (preQ0) to 7-aminomethyl-7-deazaguanine (preQ1). This chain is NADPH-dependent 7-cyano-7-deazaguanine reductase, found in Rhizobium leguminosarum bv. trifolii (strain WSM2304).